Consider the following 194-residue polypeptide: 21 kDa hemolysin (194 aa).

The signal sequence occupies residues M1–A19. BON domains follow at residues D49–E118 and I127–Q194.

Its subcellular location is the periplasm. In Actinobacillus pleuropneumoniae (Haemophilus pleuropneumoniae), this protein is 21 kDa hemolysin (hly).